Consider the following 119-residue polypeptide: Flagellar transcriptional regulator FlhD (119 aa).

This sequence belongs to the FlhD family. As to quaternary structure, homodimer; disulfide-linked. Forms a heterohexamer composed of two FlhC and four FlhD subunits. Each FlhC binds a FlhD dimer, forming a heterotrimer, and a hexamer assembles by dimerization of two heterotrimers.

Its subcellular location is the cytoplasm. Functions in complex with FlhC as a master transcriptional regulator that regulates transcription of several flagellar and non-flagellar operons by binding to their promoter region. Activates expression of class 2 flagellar genes, including fliA, which is a flagellum-specific sigma factor that turns on the class 3 genes. Also regulates genes whose products function in a variety of physiological pathways. The chain is Flagellar transcriptional regulator FlhD from Escherichia fergusonii (strain ATCC 35469 / DSM 13698 / CCUG 18766 / IAM 14443 / JCM 21226 / LMG 7866 / NBRC 102419 / NCTC 12128 / CDC 0568-73).